Reading from the N-terminus, the 322-residue chain is Glucokinase (322 aa).

Residue 10–15 (GDIGGT) participates in ATP binding.

Belongs to the bacterial glucokinase family.

It is found in the cytoplasm. The catalysed reaction is D-glucose + ATP = D-glucose 6-phosphate + ADP + H(+). The sequence is that of Glucokinase from Hahella chejuensis (strain KCTC 2396).